The sequence spans 96 residues: UPF0213 protein BCE33L0031 (96 aa).

One can recognise a GIY-YIG domain in the interval 4 to 79 (NKHCFYVVEC…KQLNRKQKEE (76 aa)).

This sequence belongs to the UPF0213 family.

This chain is UPF0213 protein BCE33L0031, found in Bacillus cereus (strain ZK / E33L).